Here is a 218-residue protein sequence, read N- to C-terminus: Ribonuclease HII (218 aa).

The region spanning 12 to 206 is the RNase H type-2 domain; sequence GRVAGVDEVG…VREALARSAL (195 aa). The a divalent metal cation site is built by aspartate 18, glutamate 19, and aspartate 115.

This sequence belongs to the RNase HII family. It depends on Mn(2+) as a cofactor. Mg(2+) is required as a cofactor.

It is found in the cytoplasm. It catalyses the reaction Endonucleolytic cleavage to 5'-phosphomonoester.. Its function is as follows. Endonuclease that specifically degrades the RNA of RNA-DNA hybrids. This chain is Ribonuclease HII, found in Rhodospirillum rubrum (strain ATCC 11170 / ATH 1.1.1 / DSM 467 / LMG 4362 / NCIMB 8255 / S1).